A 397-amino-acid polypeptide reads, in one-letter code: GDP-mannose transporter 1 (397 aa).

The disordered stretch occupies residues 1–57 (MSKPFVPTPNISRPATPSSLDYGKDEASSTLLRDMGERGDRERKDREERDKKEAMPS). The Cytoplasmic segment spans residues 1–61 (MSKPFVPTPN…KEAMPSGQDQ (61 aa)). Polar residues predominate over residues 9–19 (PNISRPATPSS). The segment covering 34 to 54 (DMGERGDRERKDREERDKKEA) has biased composition (basic and acidic residues). A helical membrane pass occupies residues 62–82 (VLPILSYCAASIMMTVVNKYV). Over 83–87 (VSGAN) the chain is Lumenal. N-linked (GlcNAc...) asparagine glycosylation occurs at Asn87. The helical transmembrane segment at 88-108 (FTMTFLLLAIQSSVCVLAVTT) threads the bilayer. The Cytoplasmic portion of the chain corresponds to 109 to 124 (VKKLGFISFRDFDKND). The chain crosses the membrane as a helical span at residues 125-142 (AKAWWPISTLLVAVIYTG). At 143-145 (SKA) the chain is on the lumenal side. The helical transmembrane segment at 146-168 (LQFLSIPVYTIFKNLTIILIAYG) threads the bilayer. Residues 169–174 (EVFMFN) are Cytoplasmic-facing. A helical membrane pass occupies residues 175 to 197 (GAVSGLTLCSFALMVGSSIIAAW). The Lumenal segment spans residues 198–228 (SDITSVWNKEPELDPITGLEITVGPVSTIGG). The chain crosses the membrane as a helical span at residues 229–249 (LNAGYIWMALNCFVSAAYVLF). The Cytoplasmic segment spans residues 250–272 (MRKRIKVTGFKDWDSMYYNNLLS). The helical transmembrane segment at 273 to 293 (IPILVVFSLVIEDWGSESLAL) threads the bilayer. Over 294 to 300 (NFPASNR) the chain is Lumenal. A helical transmembrane segment spans residues 301-321 (VLLLSAMAFSGAAAVFISYST). Over 322–332 (AWCVRITGSTT) the chain is Cytoplasmic. The helical transmembrane segment at 333 to 353 (YSMVGALNKLPVAASGILFFG) threads the bilayer. Over 354–355 (DP) the chain is Lumenal. Residues 356–376 (ANFGNISAIAVGGVAGVVYAV) form a helical membrane-spanning segment. The Cytoplasmic portion of the chain corresponds to 377–397 (AKTNQAKVEKARQARAAGGRP).

Belongs to the TPT transporter family. SLC35D subfamily. Homooligomer.

Its subcellular location is the golgi apparatus membrane. The protein resides in the cytoplasmic vesicle membrane. The protein localises to the endoplasmic reticulum membrane. Its function is as follows. Involved in the import of GDP-mannose from the cytoplasm into the Golgi lumen. Involved in capsule synthesis. This is GDP-mannose transporter 1 (GMT1) from Cryptococcus neoformans var. neoformans serotype D (strain B-3501A) (Filobasidiella neoformans).